Consider the following 146-residue polypeptide: VHWTAEEKSAITAIWGKVDVAAIGGEALCRLLIVYPWTQRFFTSFGNLSNAAAIQSNAQVKAHGKKVFTAFGDAVKNPEGVKDTFAKLSELHCDKLHVDPVNFKLLGQILITVLAAHFGKDFTPNVQAAYQKLVSVVAHALAHQYH.

Residues 2–146 form the Globin domain; that stretch reads HWTAEEKSAI…VAHALAHQYH (145 aa). Residues His-63 and His-92 each coordinate heme b.

Belongs to the globin family. Heterotetramer of two alpha chains and two beta chains. Oxygenation results in dissociation to dimers. As to expression, red blood cells.

Functionally, involved in oxygen transport from the lung to the various peripheral tissues. This chain is Hemoglobin subunit beta (HBB), found in Erythrolamprus miliaris (South American water snake).